Reading from the N-terminus, the 646-residue chain is Cartilage acidic protein 1 (646 aa).

A signal peptide spans 1 to 28 (MAPSADPGMVRMALLLLPPLWLLPLTGG). The stretch at 47-89 (DYDSNPTQLNYGVAVTDVDHDGDFEIVVAGYTGPNLVLKYNRA) is one FG-GAP 1; atypical repeat. One copy of the FG-GAP 2; atypical repeat lies at 106–148 (YALRDRQGNAIGVTACDIDGDGREEIYFLNTNNAFSGVATYTD). The stretch at 284-334 (AGVDDPHQHGRGVALADFNRDGKVDIVYGNWNGPHRLYLQMSAHGKVRFRD) is one FG-GAP 3; atypical repeat. The FG-GAP 4; atypical repeat unit spans residues 396–438 (GDALEPEGRGTGGVVTDFDGDGMLDLILSHGESMAQPLSVFRG). Residues 560–606 (DTNECIQFPFVCPRDKPVCVNTYGSYRCRTNKRCNRGYEPNEDGTAC) enclose the EGF-like domain. 3 cysteine pairs are disulfide-bonded: C564–C578, C571–C587, and C593–C606.

The protein localises to the secreted. It localises to the extracellular space. It is found in the extracellular matrix. This chain is Cartilage acidic protein 1 (Crtac1), found in Mus musculus (Mouse).